Here is a 104-residue protein sequence, read N- to C-terminus: Photosystem II reaction center Psb28 protein (104 aa).

This sequence belongs to the Psb28 family. In terms of assembly, part of the photosystem II complex.

It localises to the cellular thylakoid membrane. The chain is Photosystem II reaction center Psb28 protein from Synechococcus sp. (strain JA-3-3Ab) (Cyanobacteria bacterium Yellowstone A-Prime).